A 489-amino-acid polypeptide reads, in one-letter code: MSFRKVVRQSKFRHVFGQPVKNDQCYEDIRVSRVTWDSTFCAVNPKFLAVIVEASGGGAFLVLPLSKTGRIDKAYPTVCGHTGPVLDIDWCPHNDEVIASGSEDCTVMVWQIPENGLTSPLTEPVVVLEGHTKRVGIIAWHPTARNVLLSAGCDNVVLIWNVGTAEELYRLDSLHPDLIYNVSWNRNGSLFCSACKDKSVRIIDPRQGTLVAEREKAHEGARPMRAIFLADGKVFTTGFSRMSERQLALWDPENLEEPMALQELDSSNGALLPFYDPDTSVVYVCGKGDSSIRYFEITEEPPYIHFLNTFTSKEPQRGMGSMPKRGLEVSKCEIARFYKLHERKCEPIVMTVPRKSDLFQDDLYPDTAGPEAALEAEEWVSGRDADPILISLREAYVPSKQRDLKISRRNVLSDSRPAMAPGSSRLGAPASTTAAADATPSGSLARAGEAGKLEEVMQELRALRALVKEQGERICRLEEQLGRMENGDA.

The residue at position 2 (S2) is a Phosphoserine. 5 WD repeats span residues 80–120, 130–170, 174–213, 217–260, and 265–305; these read GHTG…LTSP, GHTK…ELYR, LHPD…LVAE, AHEG…EPMA, and DSSN…PYIH. The tract at residues 414–443 is disordered; sequence DSRPAMAPGSSRLGAPASTTAAADATPSGS. Positions 427 to 443 are enriched in low complexity; that stretch reads GAPASTTAAADATPSGS. Positions 449–474 form a coiled coil; it reads EAGKLEEVMQELRALRALVKEQGERI.

Belongs to the WD repeat coronin family. In terms of assembly, forms homooligomers, but does not form complexes with the other coronins. Interacts with Arp2/3 complex components, including ACTR2, ARPC1B and ARPC2. Binds actin. Post-translationally, phosphorylation on Ser-2 regulates the interaction with the Arp2/3 complex and cell motility in fibroblasts. Phosphorylation does not seem to affect subcellular location.

It localises to the cytoplasm. Its subcellular location is the cytoskeleton. It is found in the stress fiber. In terms of biological role, regulates leading edge dynamics and cell motility in fibroblasts. May be involved in cytokinesis and signal transduction. The sequence is that of Coronin-1B (CORO1B) from Pongo abelii (Sumatran orangutan).